A 94-amino-acid chain; its full sequence is Exodeoxyribonuclease 7 small subunit (94 aa).

It belongs to the XseB family. Heterooligomer composed of large and small subunits.

Its subcellular location is the cytoplasm. It carries out the reaction Exonucleolytic cleavage in either 5'- to 3'- or 3'- to 5'-direction to yield nucleoside 5'-phosphates.. Functionally, bidirectionally degrades single-stranded DNA into large acid-insoluble oligonucleotides, which are then degraded further into small acid-soluble oligonucleotides. The sequence is that of Exodeoxyribonuclease 7 small subunit from Ralstonia nicotianae (strain ATCC BAA-1114 / GMI1000) (Ralstonia solanacearum).